Reading from the N-terminus, the 359-residue chain is uncharacterized protein (359 aa).

Positions 1–17 (MLGRSLTSVLIVPTGIG) are cleaved as a signal peptide. C18 is lipidated: N-palmitoyl cysteine. C18 is lipidated: S-diacylglycerol cysteine.

The protein localises to the cell membrane. This is an uncharacterized protein from Synechococcus sp. (strain ATCC 27144 / PCC 6301 / SAUG 1402/1) (Anacystis nidulans).